Reading from the N-terminus, the 547-residue chain is uncharacterized protein (547 aa).

To B.subtilis RocB.

This is an uncharacterized protein from Bacillus subtilis (strain 168).